The sequence spans 970 residues: Longitudinals lacking protein, isoforms F/I/K/T (970 aa).

The 66-residue stretch at 32–97 (VDCTLAAEGK…MYRGEVNISQ (66 aa)) folds into the BTB domain. Disordered stretches follow at residues 115 to 200 (LSDN…SSVL), 228 to 340 (SSGP…ASAS), 447 to 468 (DAQQRDPQASKQDKGEQTEGAQ), and 790 to 843 (QTVH…LQDD). Composition is skewed to low complexity over residues 162–175 (SGDVSGSREGSSSP), 228–251 (SSGPAAGTSSQASSTQQQQPLTST), 263–293 (TSSTAAPASGASASAAVQQAHLHQQQAQTTS), and 329–340 (NSATGPNPASAS). Composition is skewed to polar residues over residues 447 to 456 (DAQQRDPQAS) and 808 to 818 (QLQTHHIQTVV). Low complexity predominate over residues 819–828 (QSSSGQQQHD). The C2H2-type 1; degenerate zinc finger occupies 903–925 (YVCRHCGKKYRWKSTLRRHENVE). A C2H2-type 2 zinc finger spans residues 933 to 955 (HPCPYCSYKAKQRGNLGVHVRKH).

By stage 11, isoform F is expressed throughout the mesoderm whereas isoform T, and at low levels isoform I, is expressed throughout the ectoderm. Isoform K is expressed in both mesoderm and ectoderm. Expression becomes restricted during later stages; starting from stage 14 to 15, isoform F is expressed in the gut. Isoform I is expressed in the CNS. Isoform I and isoform F show expression in the epithelium starting at stage 14, though for isoform I the CNS expression remains predominant. Expression is also seen in specific types of cells in the embryo; isoform K is expressed in the ventral furrow at stage 5 and in a dynamic pattern in the ventral neurogenic region starting at stage 7. Isoform T is expressed around the tracheal pits at stage 11. Isoform F shows transient enrichment in a dorsal cell layer in the CNS at stages 13 and 14.

It is found in the nucleus. Functionally, putative transcription factor required for axon growth and guidance in the central and peripheral nervous systems. Repels CNS axons away from the midline by promoting the expression of the midline repellent sli and its receptor robo. The protein is Longitudinals lacking protein, isoforms F/I/K/T of Drosophila melanogaster (Fruit fly).